Here is a 183-residue protein sequence, read N- to C-terminus: Adenine phosphoribosyltransferase (183 aa).

It belongs to the purine/pyrimidine phosphoribosyltransferase family. As to quaternary structure, homodimer.

It localises to the cytoplasm. The enzyme catalyses AMP + diphosphate = 5-phospho-alpha-D-ribose 1-diphosphate + adenine. The protein operates within purine metabolism; AMP biosynthesis via salvage pathway; AMP from adenine: step 1/1. Its function is as follows. Catalyzes a salvage reaction resulting in the formation of AMP, that is energically less costly than de novo synthesis. The chain is Adenine phosphoribosyltransferase from Salmonella arizonae (strain ATCC BAA-731 / CDC346-86 / RSK2980).